The chain runs to 65 residues: Large ribosomal subunit protein bL35 (65 aa).

Positions 1-16 (MPKMKTKSGAKKRFRV) are enriched in basic residues. The segment at 1–25 (MPKMKTKSGAKKRFRVRPGGTVKRG) is disordered.

It belongs to the bacterial ribosomal protein bL35 family.

In Herminiimonas arsenicoxydans, this protein is Large ribosomal subunit protein bL35.